The chain runs to 282 residues: Ribosomal RNA small subunit methyltransferase I (282 aa).

Belongs to the methyltransferase superfamily. RsmI family.

Its subcellular location is the cytoplasm. The enzyme catalyses cytidine(1402) in 16S rRNA + S-adenosyl-L-methionine = 2'-O-methylcytidine(1402) in 16S rRNA + S-adenosyl-L-homocysteine + H(+). In terms of biological role, catalyzes the 2'-O-methylation of the ribose of cytidine 1402 (C1402) in 16S rRNA. This chain is Ribosomal RNA small subunit methyltransferase I, found in Pseudomonas aeruginosa (strain ATCC 15692 / DSM 22644 / CIP 104116 / JCM 14847 / LMG 12228 / 1C / PRS 101 / PAO1).